The following is a 477-amino-acid chain: Maternal protein exuperantia-2 (477 aa).

Residues 196 to 209 (KDGNSTKEDEHENP) are compositionally biased toward basic and acidic residues. Disordered stretches follow at residues 196–226 (KDGN…NQKQ) and 384–477 (TIKP…FADI). Over residues 385–402 (IKPRCKRSGNGTRRRNRA) the composition is skewed to basic residues.

Ensures the proper localization of the mRNA of the bicoid gene to the anterior regions of the oocyte thus playing a fundamental role in the establishment of the polarity of the oocyte. May bind the bcd mRNA. In Drosophila pseudoobscura pseudoobscura (Fruit fly), this protein is Maternal protein exuperantia-2 (exu2).